The chain runs to 345 residues: Dihydroorotase (345 aa).

2 residues coordinate Zn(2+): H14 and H16. Residues 16 to 18 (HLR) and N42 each bind substrate. Zn(2+) contacts are provided by K100, H137, and H175. K100 carries the post-translational modification N6-carboxylysine. H137 is a substrate binding site. L220 contacts substrate. Residue D248 participates in Zn(2+) binding. Residue D248 is part of the active site. Residues H252 and A264 each coordinate substrate.

It belongs to the metallo-dependent hydrolases superfamily. DHOase family. Class II DHOase subfamily. As to quaternary structure, homodimer. The cofactor is Zn(2+).

The enzyme catalyses (S)-dihydroorotate + H2O = N-carbamoyl-L-aspartate + H(+). It functions in the pathway pyrimidine metabolism; UMP biosynthesis via de novo pathway; (S)-dihydroorotate from bicarbonate: step 3/3. In terms of biological role, catalyzes the reversible cyclization of carbamoyl aspartate to dihydroorotate. This Nitrosococcus oceani (strain ATCC 19707 / BCRC 17464 / JCM 30415 / NCIMB 11848 / C-107) protein is Dihydroorotase.